We begin with the raw amino-acid sequence, 353 residues long: Guanine nucleotide-binding protein G(q) subunit alpha (353 aa).

2 S-palmitoyl cysteine lipidation sites follow: C3 and C4. Residues 32 to 353 form the G-alpha domain; the sequence is RELKLLLLGT…QLNLKEYNLV (322 aa). The interval 35–48 is G1 motif; the sequence is KLLLLGTGESGKST. Residues 40–47, 174–180, 199–203, 268–271, and A325 each bind GTP; these read GTGESGKS, LRVRVPT, DVGGQ, and NKKD. Mg(2+) is bound by residues S47 and T180. Positions 172-180 are G2 motif; it reads DILRVRVPT. Positions 195 to 204 are G3 motif; sequence FRMVDVGGQR. The interval 264-271 is G4 motif; it reads ILFLNKKD. The interval 323–328 is G5 motif; sequence TCATDT.

This sequence belongs to the G-alpha family. G(q) subfamily. In terms of assembly, g proteins are composed of 3 units; alpha, beta and gamma. The alpha chain contains the guanine nucleotide binding site.

Functionally, guanine nucleotide-binding proteins (G proteins) are involved as modulators or transducers in various transmembrane signaling systems. This Lymnaea stagnalis (Great pond snail) protein is Guanine nucleotide-binding protein G(q) subunit alpha.